Consider the following 278-residue polypeptide: Small ribosomal subunit protein uS2 (278 aa).

The interval 233–258 is disordered; sequence IDMEAAGEAPANKGKKKSAKARLDKS.

This sequence belongs to the universal ribosomal protein uS2 family.

The polypeptide is Small ribosomal subunit protein uS2 (Bacteroides fragilis (strain ATCC 25285 / DSM 2151 / CCUG 4856 / JCM 11019 / LMG 10263 / NCTC 9343 / Onslow / VPI 2553 / EN-2)).